The following is a 459-amino-acid chain: Hemopexin (459 aa).

An N-terminal signal peptide occupies residues 1 to 23 (MARALRVPVALWLLGLCWSLAKA). Cystine bridges form between Cys-52-Cys-232, Cys-150-Cys-155, and Cys-189-Cys-201. Hemopexin repeat units lie at residues 55-95 (GWGF…WKDA), 96-140 (PSPV…FPGI), 141-185 (PFPL…SWPA), and 186-232 (VGNC…FMSC). His-81 is a heme binding site. Residue His-151 participates in heme binding. Asn-188 carries N-linked (GlcNAc...) asparagine glycosylation. N-linked (GlcNAc...) asparagine glycosylation is present at Asn-218. His-237 contributes to the heme binding site. An N-linked (GlcNAc...) asparagine glycan is attached at Asn-241. 3 disulfide bridges follow: Cys-250–Cys-453, Cys-359–Cys-401, and Cys-411–Cys-428. 4 Hemopexin repeats span residues 252 to 297 (PHLV…WPQG), 298 to 345 (PSTV…FGSP), 350 to 389 (LHSV…WTEL), and 393 to 444 (HTKV…LPQA). A heme-binding site is contributed by His-286.

It belongs to the hemopexin family.

The protein resides in the secreted. Its function is as follows. Binds heme and transports it to the liver for breakdown and iron recovery, after which the free hemopexin returns to the circulation. This is Hemopexin (HPX) from Bos taurus (Bovine).